We begin with the raw amino-acid sequence, 502 residues long: Maturase K (502 aa).

The protein belongs to the intron maturase 2 family. MatK subfamily.

The protein resides in the plastid. It is found in the chloroplast. Usually encoded in the trnK tRNA gene intron. Probably assists in splicing its own and other chloroplast group II introns. The chain is Maturase K from Tilia americana (American basswood).